The primary structure comprises 561 residues: Putative transport protein YbjL (561 aa).

The next 5 membrane-spanning stretches (helical) occupy residues 8–28 (LLNG…LCLG), 32–52 (LGSI…LLGQ), 66–86 (FMLF…SIFF), 94–114 (MLAL…GKLF), and 158–178 (NLSL…IVGA). 2 RCK C-terminal domains span residues 200–288 (RGLD…SFRN) and 292–373 (VFDR…RIGF). 6 helical membrane-spanning segments follow: residues 383 to 403 (LLAF…TFQF), 406 to 426 (FSFG…LGFM), 451 to 471 (VFMA…LGAI), 475 to 495 (MLIA…LFGA), 503 to 523 (ALLF…EIIS), and 540 to 560 (AIAN…CPGL).

It belongs to the AAE transporter (TC 2.A.81) family. YbjL subfamily.

The protein localises to the cell membrane. This is Putative transport protein YbjL from Shigella dysenteriae serotype 1 (strain Sd197).